Reading from the N-terminus, the 43-residue chain is Protein PsbN (43 aa).

A helical membrane pass occupies residues 7–27; it reads VAIFISCLLVSFTGYALYTAF.

It belongs to the PsbN family.

The protein resides in the plastid. It is found in the chloroplast thylakoid membrane. May play a role in photosystem I and II biogenesis. This Zygnema circumcarinatum (Green alga) protein is Protein PsbN.